We begin with the raw amino-acid sequence, 137 residues long: MPTINQLVRKPRKSKVEKSDSPALNIGYNSHRKVHTKLSAPQKRGVATRVGTMTPKKPNSALRKFARVRLSNLIEVTAYIPGIGHNLQEHSVVLIRGGRVKDLPGVRYHIVRGALDTAGVADRKQGRSKYGAKRPKG.

2 disordered regions span residues 1-21 (MPTINQLVRKPRKSKVEKSDS) and 36-57 (TKLSAPQKRGVATRVGTMTPKK). 3-methylthioaspartic acid is present on D102.

It belongs to the universal ribosomal protein uS12 family. Part of the 30S ribosomal subunit. Contacts proteins S8 and S17. May interact with IF1 in the 30S initiation complex.

With S4 and S5 plays an important role in translational accuracy. Functionally, interacts with and stabilizes bases of the 16S rRNA that are involved in tRNA selection in the A site and with the mRNA backbone. Located at the interface of the 30S and 50S subunits, it traverses the body of the 30S subunit contacting proteins on the other side and probably holding the rRNA structure together. The combined cluster of proteins S8, S12 and S17 appears to hold together the shoulder and platform of the 30S subunit. The protein is Small ribosomal subunit protein uS12 of Streptococcus agalactiae serotype Ia (strain ATCC 27591 / A909 / CDC SS700).